The chain runs to 101 residues: Small ribosomal subunit protein uS14 (101 aa).

Belongs to the universal ribosomal protein uS14 family. In terms of assembly, part of the 30S ribosomal subunit. Contacts proteins S3 and S10.

Binds 16S rRNA, required for the assembly of 30S particles and may also be responsible for determining the conformation of the 16S rRNA at the A site. The sequence is that of Small ribosomal subunit protein uS14 from Bartonella henselae (strain ATCC 49882 / DSM 28221 / CCUG 30454 / Houston 1) (Rochalimaea henselae).